Consider the following 383-residue polypeptide: tRNA-specific 2-thiouridylase MnmA (383 aa).

Residues 9–16 (GMSGGVDS) and M35 each bind ATP. Positions 95 to 97 (NPD) are interaction with target base in tRNA. C100 serves as the catalytic Nucleophile. The cysteines at positions 100 and 198 are disulfide-linked. G124 lines the ATP pocket. The tract at residues 148 to 150 (KDQ) is interaction with tRNA. C198 serves as the catalytic Cysteine persulfide intermediate. Residues 310–311 (RY) are interaction with tRNA.

The protein belongs to the MnmA/TRMU family.

Its subcellular location is the cytoplasm. It carries out the reaction S-sulfanyl-L-cysteinyl-[protein] + uridine(34) in tRNA + AH2 + ATP = 2-thiouridine(34) in tRNA + L-cysteinyl-[protein] + A + AMP + diphosphate + H(+). Functionally, catalyzes the 2-thiolation of uridine at the wobble position (U34) of tRNA, leading to the formation of s(2)U34. This is tRNA-specific 2-thiouridylase MnmA from Paraburkholderia phytofirmans (strain DSM 17436 / LMG 22146 / PsJN) (Burkholderia phytofirmans).